Here is a 429-residue protein sequence, read N- to C-terminus: Zinc finger protein 275 (429 aa).

Residues 31-95 are disordered; sequence VSDPSPNTDP…DGKRGSPQNL (65 aa). Residues 34-51 are compositionally biased toward polar residues; sequence PSPNTDPAKYSESTSATR. Serine 76 is modified (phosphoserine). Over residues 79-89 the composition is skewed to basic and acidic residues; sequence FRQHGDSDGKR. C2H2-type zinc fingers lie at residues 101–123 and 129–151; these read FACK…QRVH and WECG…RKSH. Positions 149–176 are disordered; it reads KSHVAAEPQPGPSRALENAAEKREQMER. A compositionally biased stretch (basic and acidic residues) spans 167–176; it reads AAEKREQMER. C2H2-type zinc fingers lie at residues 181-203, 209-231, 237-259, 265-287, 293-315, 321-343, 349-371, 377-399, and 405-427; these read FECE…LRVH, FDCE…QKLH, FACK…QRMH, FDCD…QRIH, YGCP…RRIH, YACG…ARIH, YACG…RRIH, YECD…RRIH, and CECS…QPTH.

This sequence belongs to the krueppel C2H2-type zinc-finger protein family.

It is found in the nucleus. May be involved in transcriptional regulation. The polypeptide is Zinc finger protein 275 (ZNF275) (Homo sapiens (Human)).